Here is a 413-residue protein sequence, read N- to C-terminus: Serine hydroxymethyltransferase (413 aa).

Residues Leu117 and 121–123 each bind (6S)-5,6,7,8-tetrahydrofolate; that span reads GHL. Position 226 is an N6-(pyridoxal phosphate)lysine (Lys226). Residues Glu239 and 349–351 each bind (6S)-5,6,7,8-tetrahydrofolate; that span reads SPF.

This sequence belongs to the SHMT family. Homodimer. It depends on pyridoxal 5'-phosphate as a cofactor.

Its subcellular location is the cytoplasm. It carries out the reaction (6R)-5,10-methylene-5,6,7,8-tetrahydrofolate + glycine + H2O = (6S)-5,6,7,8-tetrahydrofolate + L-serine. Its pathway is one-carbon metabolism; tetrahydrofolate interconversion. It functions in the pathway amino-acid biosynthesis; glycine biosynthesis; glycine from L-serine: step 1/1. Catalyzes the reversible interconversion of serine and glycine with tetrahydrofolate (THF) serving as the one-carbon carrier. This reaction serves as the major source of one-carbon groups required for the biosynthesis of purines, thymidylate, methionine, and other important biomolecules. Also exhibits THF-independent aldolase activity toward beta-hydroxyamino acids, producing glycine and aldehydes, via a retro-aldol mechanism. In Bacillus cytotoxicus (strain DSM 22905 / CIP 110041 / 391-98 / NVH 391-98), this protein is Serine hydroxymethyltransferase.